The sequence spans 193 residues: Ion-translocating oxidoreductase complex subunit A (193 aa).

6 consecutive transmembrane segments (helical) span residues 5–25 (LLLF…FLGL), 47–67 (FVMT…LIPL), 72–92 (LRTL…EMVV), 102–122 (LLGI…VALL), 134–154 (ALYG…FAAI), and 171–191 (AIAL…SGLV).

The protein belongs to the NqrDE/RnfAE family. In terms of assembly, the complex is composed of six subunits: RnfA, RnfB, RnfC, RnfD, RnfE and RnfG.

It localises to the cell inner membrane. In terms of biological role, part of a membrane-bound complex that couples electron transfer with translocation of ions across the membrane. In Citrobacter koseri (strain ATCC BAA-895 / CDC 4225-83 / SGSC4696), this protein is Ion-translocating oxidoreductase complex subunit A.